Here is a 201-residue protein sequence, read N- to C-terminus: Large ribosomal subunit protein uL4 (201 aa).

The segment at Lys-44–Arg-68 is disordered.

Belongs to the universal ribosomal protein uL4 family. As to quaternary structure, part of the 50S ribosomal subunit.

In terms of biological role, one of the primary rRNA binding proteins, this protein initially binds near the 5'-end of the 23S rRNA. It is important during the early stages of 50S assembly. It makes multiple contacts with different domains of the 23S rRNA in the assembled 50S subunit and ribosome. Its function is as follows. Forms part of the polypeptide exit tunnel. The sequence is that of Large ribosomal subunit protein uL4 from Xanthomonas oryzae pv. oryzae (strain MAFF 311018).